We begin with the raw amino-acid sequence, 225 residues long: Protein-L-isoaspartate O-methyltransferase (225 aa).

Residue S75 is part of the active site.

The protein belongs to the methyltransferase superfamily. L-isoaspartyl/D-aspartyl protein methyltransferase family.

It localises to the cytoplasm. The catalysed reaction is [protein]-L-isoaspartate + S-adenosyl-L-methionine = [protein]-L-isoaspartate alpha-methyl ester + S-adenosyl-L-homocysteine. Catalyzes the methyl esterification of L-isoaspartyl residues in peptides and proteins that result from spontaneous decomposition of normal L-aspartyl and L-asparaginyl residues. It plays a role in the repair and/or degradation of damaged proteins. This Xylella fastidiosa (strain M23) protein is Protein-L-isoaspartate O-methyltransferase.